A 62-amino-acid chain; its full sequence is Large ribosomal subunit protein bL28 (62 aa).

It belongs to the bacterial ribosomal protein bL28 family.

In Bacillus velezensis (strain DSM 23117 / BGSC 10A6 / LMG 26770 / FZB42) (Bacillus amyloliquefaciens subsp. plantarum), this protein is Large ribosomal subunit protein bL28.